Consider the following 384-residue polypeptide: Dual specificity protein phosphatase 5 (384 aa).

The Rhodanese domain occupies 19 to 141 (AEARCVVLDC…FYSQYPECCV (123 aa)). The Nuclear localization signal motif lies at 53-74 (RRARGGAVSARYVLADEAARAR). One can recognise a Tyrosine-protein phosphatase domain in the interval 178-319 (GPVEILPFLY…LLQYESEILP (142 aa)). Cysteine 263 functions as the Phosphocysteine intermediate in the catalytic mechanism.

It belongs to the protein-tyrosine phosphatase family. Non-receptor class dual specificity subfamily.

It localises to the nucleus. The catalysed reaction is O-phospho-L-tyrosyl-[protein] + H2O = L-tyrosyl-[protein] + phosphate. It catalyses the reaction O-phospho-L-seryl-[protein] + H2O = L-seryl-[protein] + phosphate. The enzyme catalyses O-phospho-L-threonyl-[protein] + H2O = L-threonyl-[protein] + phosphate. Its function is as follows. Dual specificity protein phosphatase; active with phosphotyrosine, phosphoserine and phosphothreonine residues. The highest relative activity is toward ERK1. The sequence is that of Dual specificity protein phosphatase 5 (Dusp5) from Rattus norvegicus (Rat).